The following is a 185-amino-acid chain: Peptidyl-tRNA hydrolase (185 aa).

Tyrosine 14 contacts tRNA. The Proton acceptor role is filled by histidine 19. Residues tyrosine 65, asparagine 67, and asparagine 113 each coordinate tRNA.

The protein belongs to the PTH family. As to quaternary structure, monomer.

The protein localises to the cytoplasm. It catalyses the reaction an N-acyl-L-alpha-aminoacyl-tRNA + H2O = an N-acyl-L-amino acid + a tRNA + H(+). In terms of biological role, hydrolyzes ribosome-free peptidyl-tRNAs (with 1 or more amino acids incorporated), which drop off the ribosome during protein synthesis, or as a result of ribosome stalling. Catalyzes the release of premature peptidyl moieties from peptidyl-tRNA molecules trapped in stalled 50S ribosomal subunits, and thus maintains levels of free tRNAs and 50S ribosomes. The protein is Peptidyl-tRNA hydrolase of Rickettsia africae (strain ESF-5).